A 166-amino-acid chain; its full sequence is Cytochrome c-type biogenesis protein CcmE (166 aa).

Residues 1–13 lie on the Cytoplasmic side of the membrane; that stretch reads MNFLPKSRKARRR. A helical; Signal-anchor for type II membrane protein membrane pass occupies residues 14–34; sequence LTILAVAAPVVALAVGLALWG. Topologically, residues 35 to 166 are periplasmic; the sequence is MRDAISLFYT…QGYKPGKPNT (132 aa). Residues histidine 128 and tyrosine 132 each contribute to the heme site. The tract at residues 143-166 is disordered; that stretch reads EQGEWRGDGQAPSYQGYKPGKPNT.

It belongs to the CcmE/CycJ family.

It localises to the cell inner membrane. Heme chaperone required for the biogenesis of c-type cytochromes. Transiently binds heme delivered by CcmC and transfers the heme to apo-cytochromes in a process facilitated by CcmF and CcmH. This is Cytochrome c-type biogenesis protein CcmE from Caulobacter sp. (strain K31).